An 87-amino-acid polypeptide reads, in one-letter code: MSTRSRARKRSRVRSRTRRKDPIFVDGHRPRPMYVDYKDLELLSKMVNRQGRIMGRRKSGCTAASQHAVTAAIKRARFMALLPYVGE.

Basic residues predominate over residues 1 to 19 (MSTRSRARKRSRVRSRTRR). The segment at 1–25 (MSTRSRARKRSRVRSRTRRKDPIFV) is disordered.

This sequence belongs to the bacterial ribosomal protein bS18 family. In terms of assembly, part of the 30S ribosomal subunit. Forms a tight heterodimer with protein bS6.

Binds as a heterodimer with protein bS6 to the central domain of the 16S rRNA, where it helps stabilize the platform of the 30S subunit. This chain is Small ribosomal subunit protein bS18, found in Rhodopirellula baltica (strain DSM 10527 / NCIMB 13988 / SH1).